A 221-amino-acid polypeptide reads, in one-letter code: Deoxyribose-phosphate aldolase (221 aa).

Residue aspartate 90 is the Proton donor/acceptor of the active site. Lysine 152 serves as the catalytic Schiff-base intermediate with acetaldehyde. Lysine 181 acts as the Proton donor/acceptor in catalysis.

The protein belongs to the DeoC/FbaB aldolase family. DeoC type 1 subfamily.

Its subcellular location is the cytoplasm. The enzyme catalyses 2-deoxy-D-ribose 5-phosphate = D-glyceraldehyde 3-phosphate + acetaldehyde. The protein operates within carbohydrate degradation; 2-deoxy-D-ribose 1-phosphate degradation; D-glyceraldehyde 3-phosphate and acetaldehyde from 2-deoxy-alpha-D-ribose 1-phosphate: step 2/2. Catalyzes a reversible aldol reaction between acetaldehyde and D-glyceraldehyde 3-phosphate to generate 2-deoxy-D-ribose 5-phosphate. The chain is Deoxyribose-phosphate aldolase from Exiguobacterium sp. (strain ATCC BAA-1283 / AT1b).